Consider the following 168-residue polypeptide: Photosystem I assembly protein Ycf3 (168 aa).

TPR repeat units follow at residues 35 to 68 (AFTY…EIDP), 72 to 105 (SYIL…NPFL), and 120 to 153 (GEQA…TPGN).

Belongs to the Ycf3 family.

The protein localises to the plastid. Its subcellular location is the chloroplast thylakoid membrane. Essential for the assembly of the photosystem I (PSI) complex. May act as a chaperone-like factor to guide the assembly of the PSI subunits. The protein is Photosystem I assembly protein Ycf3 of Amborella trichopoda.